The chain runs to 381 residues: Putative acetyl-CoA C-acetyltransferase VraB (381 aa).

The active-site Acyl-thioester intermediate is the cysteine 86. Histidine 338 serves as the catalytic Proton acceptor.

This sequence belongs to the thiolase-like superfamily. Thiolase family.

This is Putative acetyl-CoA C-acetyltransferase VraB (vraB) from Staphylococcus haemolyticus (strain JCSC1435).